The following is a 354-amino-acid chain: Period circadian protein (354 aa).

PAS domains are found at residues G1 to Q55 and F133 to E235. Residues I318 to S354 form a disordered region. The span at S345 to S354 shows a compositional bias: polar residues.

Forms a heterodimer with timeless (TIM); the complex then translocates into the nucleus. Phosphorylated with a circadian rhythmicity.

It is found in the nucleus. Its function is as follows. Involved in the generation of biological rhythms. The biological cycle depends on the rhythmic formation and nuclear localization of the tim-per complex. Light induces the degradation of tim, which promotes elimination of per. Nuclear activity of the heterodimer coordinatively regulates per and tim transcription negative feedback loop. Behaves as a negative element in circadian transcriptional loop. Does not appear to bind DNA, suggesting indirect transcriptional inhibition. In Manduca sexta (Tobacco hawkmoth), this protein is Period circadian protein (per).